A 338-amino-acid chain; its full sequence is MINNRICILGTGAWATALGSRLSLNGNTVFLWGIDNNEVNDINSGYNKKYFGNTKFSSSLSATTDLKTAIGDSKYIIFAIPSTALDSVLDKVKEFLSDKKSQVILINVVKGIDAETSQILSNKIKSKLGSHYYSRLVTLCGPSFATEVFEEKPTVINGTGKNLKIVKQVCELFNSDVFKVIPINDIVGLQVFSSLKNLLAIAVGLSQAEYTSVNTMSAILTMGIEEIQKIACKMKAKKWTIMSFCGIGDIFLTCSSTQSRNYSFGQDLLKKGVEKTIKENKKTVEGFEVYKTAKNIITKYNINAPIFSSIIEVLEGKLDPKEFSKKCLELFWNQKINK.

NADPH contacts are provided by W14, Y50, and K110. 3 residues coordinate sn-glycerol 3-phosphate: K110, G141, and S143. Residue A145 coordinates NADPH. Sn-glycerol 3-phosphate contacts are provided by K196, D249, S259, R260, and N261. K196 functions as the Proton acceptor in the catalytic mechanism. Position 260 (R260) interacts with NADPH. E285 provides a ligand contact to NADPH.

The protein belongs to the NAD-dependent glycerol-3-phosphate dehydrogenase family.

The protein localises to the cytoplasm. It catalyses the reaction sn-glycerol 3-phosphate + NAD(+) = dihydroxyacetone phosphate + NADH + H(+). The enzyme catalyses sn-glycerol 3-phosphate + NADP(+) = dihydroxyacetone phosphate + NADPH + H(+). The protein operates within membrane lipid metabolism; glycerophospholipid metabolism. Its function is as follows. Catalyzes the reduction of the glycolytic intermediate dihydroxyacetone phosphate (DHAP) to sn-glycerol 3-phosphate (G3P), the key precursor for phospholipid synthesis. This chain is Glycerol-3-phosphate dehydrogenase [NAD(P)+], found in Malacoplasma penetrans (strain HF-2) (Mycoplasma penetrans).